We begin with the raw amino-acid sequence, 287 residues long: Probable phosphite transport system-binding protein PtxB (287 aa).

An N-terminal signal peptide occupies residues 1-23; that stretch reads MKRLSALLLTCLLSAVSSLSALA.

This sequence belongs to the phosphate/phosphite/phosphonate binding protein family.

Its function is as follows. Probably forms part of a binding-protein-dependent phosphite transporter. Required for oxidation of phosphite to phosphate. This chain is Probable phosphite transport system-binding protein PtxB (ptxB), found in Stutzerimonas stutzeri (Pseudomonas stutzeri).